A 159-amino-acid polypeptide reads, in one-letter code: Transcription elongation factor GreA (159 aa).

This sequence belongs to the GreA/GreB family.

In terms of biological role, necessary for efficient RNA polymerase transcription elongation past template-encoded arresting sites. The arresting sites in DNA have the property of trapping a certain fraction of elongating RNA polymerases that pass through, resulting in locked ternary complexes. Cleavage of the nascent transcript by cleavage factors such as GreA or GreB allows the resumption of elongation from the new 3'terminus. GreA releases sequences of 2 to 3 nucleotides. The sequence is that of Transcription elongation factor GreA from Mycoplasmoides gallisepticum (strain R(low / passage 15 / clone 2)) (Mycoplasma gallisepticum).